A 336-amino-acid chain; its full sequence is MIVLGIESSCDETGLAIYDYSKKKLIADELYSQVKLHKKYGGVVPELASREHIAKLNLLAKKIFKETGLSFEDIDCIAYTAMPGLVGALMVGATFAKTLGLIHNIDTIAVHHLEGHLLSPLLDHNSNIEYPFVALLVSGGHTQLFEVKEFGEYSLLGESIDDAAGEAFDKTTKLLGMGYPGGVEVANLADQATDKSKYILPRPMKNKPNLDFSFSGLKTAVLNTWYDEQDQSLENKANLCYAFQNAAIDVLVSKCAKALQKTKNTRLVISGGVSANKLLRHQLDLLAKNREYQIFFPPMKYCTDNGAMIALAGAYRYVNGFKDSNLEINVKARSPL.

2 residues coordinate Fe cation: His112 and His116. Residues 136–140 (LVSGG), Asp169, Gly182, and Asn276 contribute to the substrate site. Asp304 is a Fe cation binding site.

Belongs to the KAE1 / TsaD family. Fe(2+) serves as cofactor.

The protein resides in the cytoplasm. It carries out the reaction L-threonylcarbamoyladenylate + adenosine(37) in tRNA = N(6)-L-threonylcarbamoyladenosine(37) in tRNA + AMP + H(+). Its function is as follows. Required for the formation of a threonylcarbamoyl group on adenosine at position 37 (t(6)A37) in tRNAs that read codons beginning with adenine. Is involved in the transfer of the threonylcarbamoyl moiety of threonylcarbamoyl-AMP (TC-AMP) to the N6 group of A37, together with TsaE and TsaB. TsaD likely plays a direct catalytic role in this reaction. In Francisella tularensis subsp. holarctica (strain LVS), this protein is tRNA N6-adenosine threonylcarbamoyltransferase.